Here is a 251-residue protein sequence, read N- to C-terminus: Triosephosphate isomerase (251 aa).

12–14 (NWK) provides a ligand contact to substrate. The active-site Electrophile is histidine 99. The active-site Proton acceptor is the glutamate 169. Substrate contacts are provided by residues glycine 175, serine 214, and 235 to 236 (GG).

Belongs to the triosephosphate isomerase family. Homodimer.

Its subcellular location is the cytoplasm. The enzyme catalyses D-glyceraldehyde 3-phosphate = dihydroxyacetone phosphate. Its pathway is carbohydrate biosynthesis; gluconeogenesis. The protein operates within carbohydrate degradation; glycolysis; D-glyceraldehyde 3-phosphate from glycerone phosphate: step 1/1. In terms of biological role, involved in the gluconeogenesis. Catalyzes stereospecifically the conversion of dihydroxyacetone phosphate (DHAP) to D-glyceraldehyde-3-phosphate (G3P). The polypeptide is Triosephosphate isomerase (Bradyrhizobium sp. (strain ORS 278)).